Reading from the N-terminus, the 1129-residue chain is Phytochrome A type 3 (1129 aa).

Residues 1–21 (MSSSRPASSSSSRNRQSSQAR) show a composition bias toward low complexity. The tract at residues 1–24 (MSSSRPASSSSSRNRQSSQARVLA) is disordered. The 186-residue stretch at 217 to 402 (SMEVLCNTVV…VFAVHVNREF (186 aa)) folds into the GAF domain. A phytochromobilin-binding site is contributed by cysteine 322. 2 PAS domains span residues 618 to 688 (VTSE…LQGK) and 748 to 822 (VEGD…VSLC). The Histidine kinase domain maps to 902–1122 (YMRHAINNPL…TFIITAELAS (221 aa)).

The protein belongs to the phytochrome family. Homodimer. In terms of processing, contains one covalently linked phytochromobilin chromophore.

Regulatory photoreceptor which exists in two forms that are reversibly interconvertible by light: the Pr form that absorbs maximally in the red region of the spectrum and the Pfr form that absorbs maximally in the far-red region. Photoconversion of Pr to Pfr induces an array of morphogenic responses, whereas reconversion of Pfr to Pr cancels the induction of those responses. Pfr controls the expression of a number of nuclear genes including those encoding the small subunit of ribulose-bisphosphate carboxylase, chlorophyll A/B binding protein, protochlorophyllide reductase, rRNA, etc. It also controls the expression of its own gene(s) in a negative feedback fashion. The sequence is that of Phytochrome A type 3 (PHYA3) from Avena sativa (Oat).